The sequence spans 318 residues: Probable 3-hydroxyisobutyrate dehydrogenase-like 3, mitochondrial (318 aa).

NAD(+) contacts are provided by residues 35-64 (TRIG…TVYA) and Ser129. The active site involves Lys203. Lys271 contacts NAD(+).

It belongs to the HIBADH-related family. 3-hydroxyisobutyrate dehydrogenase subfamily.

The protein resides in the mitochondrion. It carries out the reaction 3-hydroxy-2-methylpropanoate + NAD(+) = 2-methyl-3-oxopropanoate + NADH + H(+). The protein operates within amino-acid degradation; L-valine degradation. The sequence is that of Probable 3-hydroxyisobutyrate dehydrogenase-like 3, mitochondrial from Arabidopsis thaliana (Mouse-ear cress).